Here is a 256-residue protein sequence, read N- to C-terminus: MLLVIDVGNSNIVLGIYDGDSLVRDWRVSTDKSKTTDEYGILVHELFRLAGIDFSRITDIIISSVVPTLTGVLEKLSLQYFDFKPYVVGPGIKTGMSIHYDNPKEVGADRIVNAVAGYEKHHTALIIVDFGTATTFDYVNKRGEYCGGAIAPGLMISMEALFQKASKLPRVEITKPPAIVAKNTVNSMQAGIFYGYVGLVDGIVTRMKGEGKENPKVIATGGLAGLIAPESTTIEEVDEYLTLEGLRILYQRNRES.

6-13 (DVGNSNIV) lines the ATP pocket. Substrate is bound by residues Tyr-100 and 107–110 (GADR). Catalysis depends on Asp-109, which acts as the Proton acceptor. Asp-129 provides a ligand contact to K(+). Thr-132 serves as a coordination point for ATP. Thr-184 contributes to the substrate binding site.

Belongs to the type III pantothenate kinase family. In terms of assembly, homodimer. The cofactor is NH4(+). K(+) is required as a cofactor.

It localises to the cytoplasm. It carries out the reaction (R)-pantothenate + ATP = (R)-4'-phosphopantothenate + ADP + H(+). Its pathway is cofactor biosynthesis; coenzyme A biosynthesis; CoA from (R)-pantothenate: step 1/5. In terms of biological role, catalyzes the phosphorylation of pantothenate (Pan), the first step in CoA biosynthesis. This chain is Type III pantothenate kinase, found in Geotalea daltonii (strain DSM 22248 / JCM 15807 / FRC-32) (Geobacter daltonii).